We begin with the raw amino-acid sequence, 420 residues long: Dihydrolipoyllysine-residue succinyltransferase component of 2-oxoglutarate dehydrogenase complex (420 aa).

Residues M1–G76 form the Lipoyl-binding domain. An N6-lipoyllysine modification is found at K42. The tract at residues V75–A201 is disordered. Residues N81 to S90 show a composition bias toward polar residues. Positions S91–P102 are enriched in basic and acidic residues. Over residues K103–P127 the composition is skewed to polar residues. One can recognise a Peripheral subunit-binding (PSBD) domain in the interval N124 to Q160. Residues D149–N158 show a composition bias toward basic and acidic residues. Positions S159–P188 are enriched in low complexity. Residues H391 and D395 contribute to the active site.

This sequence belongs to the 2-oxoacid dehydrogenase family. In terms of assembly, forms a 24-polypeptide structural core with octahedral symmetry. Part of the 2-oxoglutarate dehydrogenase (OGDH) complex composed of E1 (2-oxoglutarate dehydrogenase), E2 (dihydrolipoamide succinyltransferase) and E3 (dihydrolipoamide dehydrogenase); the complex contains multiple copies of the three enzymatic components (E1, E2 and E3). (R)-lipoate is required as a cofactor.

The catalysed reaction is N(6)-[(R)-dihydrolipoyl]-L-lysyl-[protein] + succinyl-CoA = N(6)-[(R)-S(8)-succinyldihydrolipoyl]-L-lysyl-[protein] + CoA. The protein operates within amino-acid degradation; L-lysine degradation via saccharopine pathway; glutaryl-CoA from L-lysine: step 6/6. E2 component of the 2-oxoglutarate dehydrogenase (OGDH) complex which catalyzes the second step in the conversion of 2-oxoglutarate to succinyl-CoA and CO(2). This Staphylococcus epidermidis (strain ATCC 12228 / FDA PCI 1200) protein is Dihydrolipoyllysine-residue succinyltransferase component of 2-oxoglutarate dehydrogenase complex (odhB).